The primary structure comprises 481 residues: Protein nucleotidyltransferase YdiU (481 aa).

ATP contacts are provided by Gly-87, Gly-89, Arg-90, Lys-110, Asp-122, Gly-123, Arg-173, and Arg-180. Asp-249 acts as the Proton acceptor in catalysis. Positions 250 and 259 each coordinate Mg(2+). ATP is bound at residue Asp-259.

It belongs to the SELO family. It depends on Mg(2+) as a cofactor. Requires Mn(2+) as cofactor.

It catalyses the reaction L-seryl-[protein] + ATP = 3-O-(5'-adenylyl)-L-seryl-[protein] + diphosphate. It carries out the reaction L-threonyl-[protein] + ATP = 3-O-(5'-adenylyl)-L-threonyl-[protein] + diphosphate. The catalysed reaction is L-tyrosyl-[protein] + ATP = O-(5'-adenylyl)-L-tyrosyl-[protein] + diphosphate. The enzyme catalyses L-histidyl-[protein] + UTP = N(tele)-(5'-uridylyl)-L-histidyl-[protein] + diphosphate. It catalyses the reaction L-seryl-[protein] + UTP = O-(5'-uridylyl)-L-seryl-[protein] + diphosphate. It carries out the reaction L-tyrosyl-[protein] + UTP = O-(5'-uridylyl)-L-tyrosyl-[protein] + diphosphate. In terms of biological role, nucleotidyltransferase involved in the post-translational modification of proteins. It can catalyze the addition of adenosine monophosphate (AMP) or uridine monophosphate (UMP) to a protein, resulting in modifications known as AMPylation and UMPylation. This is Protein nucleotidyltransferase YdiU from Mycobacterium sp. (strain KMS).